Consider the following 77-residue polypeptide: Acyl carrier protein (77 aa).

Residues 1–75 (MVFEKVKDII…DVVNYIKAHT (75 aa)) form the Carrier domain. O-(pantetheine 4'-phosphoryl)serine is present on Ser35.

The protein belongs to the acyl carrier protein (ACP) family. 4'-phosphopantetheine is transferred from CoA to a specific serine of apo-ACP by AcpS. This modification is essential for activity because fatty acids are bound in thioester linkage to the sulfhydryl of the prosthetic group.

It localises to the cytoplasm. It participates in lipid metabolism; fatty acid biosynthesis. Carrier of the growing fatty acid chain in fatty acid biosynthesis. The polypeptide is Acyl carrier protein (Clostridium acetobutylicum (strain ATCC 824 / DSM 792 / JCM 1419 / IAM 19013 / LMG 5710 / NBRC 13948 / NRRL B-527 / VKM B-1787 / 2291 / W)).